The sequence spans 885 residues: Alanine--tRNA ligase (885 aa).

Residues histidine 569, histidine 573, cysteine 672, and histidine 676 each coordinate Zn(2+).

It belongs to the class-II aminoacyl-tRNA synthetase family. Zn(2+) is required as a cofactor.

The protein resides in the cytoplasm. It carries out the reaction tRNA(Ala) + L-alanine + ATP = L-alanyl-tRNA(Ala) + AMP + diphosphate. Functionally, catalyzes the attachment of alanine to tRNA(Ala) in a two-step reaction: alanine is first activated by ATP to form Ala-AMP and then transferred to the acceptor end of tRNA(Ala). Also edits incorrectly charged Ser-tRNA(Ala) and Gly-tRNA(Ala) via its editing domain. In Chlorobaculum tepidum (strain ATCC 49652 / DSM 12025 / NBRC 103806 / TLS) (Chlorobium tepidum), this protein is Alanine--tRNA ligase.